We begin with the raw amino-acid sequence, 250 residues long: Geranylgeranylglyceryl phosphate synthase (250 aa).

The Mg(2+) site is built by Asp23 and Ser52. Sn-glycerol 1-phosphate contacts are provided by residues 170-176 (YIEAGSG), 202-203 (GG), and 224-225 (GT).

The protein belongs to the GGGP/HepGP synthase family. Group II subfamily. Mg(2+) serves as cofactor.

The protein localises to the cytoplasm. The catalysed reaction is sn-glycerol 1-phosphate + (2E,6E,10E)-geranylgeranyl diphosphate = sn-3-O-(geranylgeranyl)glycerol 1-phosphate + diphosphate. It functions in the pathway membrane lipid metabolism; glycerophospholipid metabolism. Functionally, prenyltransferase that catalyzes the transfer of the geranylgeranyl moiety of geranylgeranyl diphosphate (GGPP) to the C3 hydroxyl of sn-glycerol-1-phosphate (G1P). This reaction is the first ether-bond-formation step in the biosynthesis of archaeal membrane lipids. The polypeptide is Geranylgeranylglyceryl phosphate synthase (Methanobrevibacter smithii (strain ATCC 35061 / DSM 861 / OCM 144 / PS)).